The primary structure comprises 82 residues: Beta-neurotoxin Css9 (82 aa).

The first 17 residues, 1–17 (MKLLMLIVALMIIGVQS), serve as a signal peptide directing secretion. The region spanning 18–81 (KDGYPMDHKG…VWDRATNKCR (64 aa)) is the LCN-type CS-alpha/beta domain. Intrachain disulfides connect Cys28–Cys80, Cys32–Cys54, Cys39–Cys61, and Cys43–Cys63.

It belongs to the long (4 C-C) scorpion toxin superfamily. Sodium channel inhibitor family. Beta subfamily. As to expression, expressed by the venom gland.

It localises to the secreted. Functionally, beta toxins bind voltage-independently at site-4 of sodium channels (Nav) and shift the voltage of activation toward more negative potentials thereby affecting sodium channel activation and promoting spontaneous and repetitive firing. This toxin compete with high affinity with 125I-Css4 bound on rat brain synaptosome and may bind with high affinity to Nav1.1/SCN1A, Nav1.2/SCN2A and Nav1.6/SCN8A. The sequence is that of Beta-neurotoxin Css9 from Centruroides suffusus (Durango bark scorpion).